A 118-amino-acid chain; its full sequence is Large ribosomal subunit protein bL20 (118 aa).

Belongs to the bacterial ribosomal protein bL20 family.

Functionally, binds directly to 23S ribosomal RNA and is necessary for the in vitro assembly process of the 50S ribosomal subunit. It is not involved in the protein synthesizing functions of that subunit. This is Large ribosomal subunit protein bL20 from Synechococcus sp. (strain JA-2-3B'a(2-13)) (Cyanobacteria bacterium Yellowstone B-Prime).